The sequence spans 611 residues: Glutamine--fructose-6-phosphate aminotransferase [isomerizing] (611 aa).

Catalysis depends on Cys-2, which acts as the Nucleophile; for GATase activity. The 218-residue stretch at 2-219 (CGIVGAVAER…EGDIAEIRRD (218 aa)) folds into the Glutamine amidotransferase type-2 domain. SIS domains are found at residues 287 to 427 (AADL…VRGT) and 460 to 601 (IAEL…VDQP). Catalysis depends on Lys-606, which acts as the For Fru-6P isomerization activity.

In terms of assembly, homodimer.

The protein localises to the cytoplasm. The catalysed reaction is D-fructose 6-phosphate + L-glutamine = D-glucosamine 6-phosphate + L-glutamate. In terms of biological role, catalyzes the first step in hexosamine metabolism, converting fructose-6P into glucosamine-6P using glutamine as a nitrogen source. In Pseudomonas putida (strain ATCC 47054 / DSM 6125 / CFBP 8728 / NCIMB 11950 / KT2440), this protein is Glutamine--fructose-6-phosphate aminotransferase [isomerizing].